We begin with the raw amino-acid sequence, 378 residues long: ATP phosphoribosyltransferase regulatory subunit (378 aa).

It belongs to the class-II aminoacyl-tRNA synthetase family. HisZ subfamily. As to quaternary structure, heteromultimer composed of HisG and HisZ subunits.

It localises to the cytoplasm. It participates in amino-acid biosynthesis; L-histidine biosynthesis; L-histidine from 5-phospho-alpha-D-ribose 1-diphosphate: step 1/9. In terms of biological role, required for the first step of histidine biosynthesis. May allow the feedback regulation of ATP phosphoribosyltransferase activity by histidine. This is ATP phosphoribosyltransferase regulatory subunit from Brucella abortus (strain 2308).